We begin with the raw amino-acid sequence, 683 residues long: Long-chain-fatty-acid--CoA ligase 5 (683 aa).

Residues 12–32 (LPTPALICLLTFGTAIFLWLI) form a helical; Signal-anchor for type III membrane protein membrane-spanning segment. Topologically, residues 33-683 (NRPQPVLPLI…IKSLYESIEE (651 aa)) are cytoplasmic. Lysine 361 is modified (N6-acetyllysine).

This sequence belongs to the ATP-dependent AMP-binding enzyme family. Expressed most abundantly in the small intestine, and to a much lesser extent in the lung, liver, adrenal gland, adipose tissue and kidney.

The protein resides in the mitochondrion. Its subcellular location is the endoplasmic reticulum. It is found in the mitochondrion outer membrane. The protein localises to the endoplasmic reticulum membrane. It localises to the cell membrane. It catalyses the reaction a long-chain fatty acid + ATP + CoA = a long-chain fatty acyl-CoA + AMP + diphosphate. The catalysed reaction is (5Z,8Z,11Z,14Z)-eicosatetraenoate + ATP + CoA = (5Z,8Z,11Z,14Z)-eicosatetraenoyl-CoA + AMP + diphosphate. The enzyme catalyses 15-hydroxy-(5Z,8Z,11Z,13E)-eicosatetraenoate + ATP + CoA = 15-hydroxy-(5Z,8Z,11Z,13E)-eicosatetraenoyl-CoA + AMP + diphosphate. It carries out the reaction 12-hydroxy-(5Z,8Z,10E,14Z)-eicosatetraenoate + ATP + CoA = 12-hydroxy-(5Z,8Z,10E,14Z)-eicosatetraenoyl-CoA + AMP + diphosphate. It catalyses the reaction 5-hydroxy-(6E,8Z,11Z,14Z)-eicosatetraenoate + ATP + CoA = 5-hydroxy-(6E,8Z,11Z,14Z)-eicosatetraenoyl-CoA + AMP + diphosphate. The catalysed reaction is 14,15-epoxy-(5Z,8Z,11Z)-eicosatrienoate + ATP + CoA = 14,15-epoxy-(5Z,8Z,11Z)-eicosatrienoyl-CoA + AMP + diphosphate. The enzyme catalyses 11,12-epoxy-(5Z,8Z,14Z)-eicosatrienoate + ATP + CoA = 11,12-epoxy-(5Z,8Z,14Z)-eicosatrienoyl-CoA + AMP + diphosphate. It carries out the reaction hexadecanoate + ATP + CoA = hexadecanoyl-CoA + AMP + diphosphate. It catalyses the reaction (E)-hexadec-2-enoate + ATP + CoA = (2E)-hexadecenoyl-CoA + AMP + diphosphate. The catalysed reaction is (9Z)-octadecenoate + ATP + CoA = (9Z)-octadecenoyl-CoA + AMP + diphosphate. Its function is as follows. Catalyzes the conversion of long-chain fatty acids to their active form acyl-CoAs for both synthesis of cellular lipids, and degradation via beta-oxidation. ACSL5 may sensitize epithelial cells to apoptosis specifically triggered by the death ligand TRAIL at the villus tip of the crypt-villus axis of the small intestine. May have a role in the survival of glioma cells. May activate fatty acids from exogenous sources for the synthesis of triacylglycerol destined for intracellular storage. It was suggested that it may also stimulate fatty acid oxidation. Utilizes a wide range of saturated fatty acids with a preference for C16-C18 unsaturated fatty acids. The polypeptide is Long-chain-fatty-acid--CoA ligase 5 (Rattus norvegicus (Rat)).